We begin with the raw amino-acid sequence, 498 residues long: ATP synthase subunit beta, chloroplastic (498 aa).

172–179 lines the ATP pocket; that stretch reads GGAGVGKT.

Belongs to the ATPase alpha/beta chains family. In terms of assembly, F-type ATPases have 2 components, CF(1) - the catalytic core - and CF(0) - the membrane proton channel. CF(1) has five subunits: alpha(3), beta(3), gamma(1), delta(1), epsilon(1). CF(0) has four main subunits: a(1), b(1), b'(1) and c(9-12).

It is found in the plastid. Its subcellular location is the chloroplast thylakoid membrane. It carries out the reaction ATP + H2O + 4 H(+)(in) = ADP + phosphate + 5 H(+)(out). In terms of biological role, produces ATP from ADP in the presence of a proton gradient across the membrane. The catalytic sites are hosted primarily by the beta subunits. The polypeptide is ATP synthase subunit beta, chloroplastic (Gossypium barbadense (Sea Island cotton)).